We begin with the raw amino-acid sequence, 240 residues long: Nuclear receptor-interacting protein 3 (240 aa).

In Mus musculus (Mouse), this protein is Nuclear receptor-interacting protein 3 (Nrip3).